Here is a 364-residue protein sequence, read N- to C-terminus: Histidinol-phosphate aminotransferase (364 aa).

Lys226 is modified (N6-(pyridoxal phosphate)lysine).

This sequence belongs to the class-II pyridoxal-phosphate-dependent aminotransferase family. Histidinol-phosphate aminotransferase subfamily. Homodimer. Pyridoxal 5'-phosphate is required as a cofactor.

The enzyme catalyses L-histidinol phosphate + 2-oxoglutarate = 3-(imidazol-4-yl)-2-oxopropyl phosphate + L-glutamate. It participates in amino-acid biosynthesis; L-histidine biosynthesis; L-histidine from 5-phospho-alpha-D-ribose 1-diphosphate: step 7/9. This is Histidinol-phosphate aminotransferase from Campylobacter jejuni subsp. jejuni serotype O:6 (strain 81116 / NCTC 11828).